The sequence spans 365 residues: Peptide chain release factor 2 (365 aa).

Residue Gln-252 is modified to N5-methylglutamine.

Belongs to the prokaryotic/mitochondrial release factor family. Methylated by PrmC. Methylation increases the termination efficiency of RF2.

Its subcellular location is the cytoplasm. Its function is as follows. Peptide chain release factor 2 directs the termination of translation in response to the peptide chain termination codons UGA and UAA. The polypeptide is Peptide chain release factor 2 (Escherichia coli O8 (strain IAI1)).